The following is a 320-amino-acid chain: 3-hydroxybenzoate 6-hydroxylase 2 (320 aa).

The interval 1–25 (MRSTNTRSARSRPTKRSVNASATPT) is disordered. Positions 16-25 (RSVNASATPT) are enriched in polar residues.

The protein belongs to the 3-hydroxybenzoate 6-hydroxylase family. Requires FAD as cofactor.

The enzyme catalyses 3-hydroxybenzoate + NADH + O2 + H(+) = 2,5-dihydroxybenzoate + NAD(+) + H2O. Its function is as follows. Catalyzes the conversion of 3-hydroxybenzoate to gentisate. This is 3-hydroxybenzoate 6-hydroxylase 2 (hbzD) from Aquipseudomonas alcaligenes (Pseudomonas alcaligenes).